A 201-amino-acid chain; its full sequence is 3-isopropylmalate dehydratase small subunit (201 aa).

This sequence belongs to the LeuD family. LeuD type 1 subfamily. As to quaternary structure, heterodimer of LeuC and LeuD.

It catalyses the reaction (2R,3S)-3-isopropylmalate = (2S)-2-isopropylmalate. It functions in the pathway amino-acid biosynthesis; L-leucine biosynthesis; L-leucine from 3-methyl-2-oxobutanoate: step 2/4. Its function is as follows. Catalyzes the isomerization between 2-isopropylmalate and 3-isopropylmalate, via the formation of 2-isopropylmaleate. This chain is 3-isopropylmalate dehydratase small subunit, found in Sinorhizobium fredii (strain NBRC 101917 / NGR234).